The primary structure comprises 266 residues: tRNA (guanine-N(1)-)-methyltransferase (266 aa).

S-adenosyl-L-methionine-binding positions include Gly-113 and 137–142 (LGDYVL).

It belongs to the RNA methyltransferase TrmD family. Homodimer.

The protein localises to the cytoplasm. It catalyses the reaction guanosine(37) in tRNA + S-adenosyl-L-methionine = N(1)-methylguanosine(37) in tRNA + S-adenosyl-L-homocysteine + H(+). Functionally, specifically methylates guanosine-37 in various tRNAs. In Paenarthrobacter aurescens (strain TC1), this protein is tRNA (guanine-N(1)-)-methyltransferase.